A 221-amino-acid chain; its full sequence is Serine/arginine-rich splicing factor 9 (221 aa).

RRM domains are found at residues 14–89 (GRIY…FPRA) and 111–187 (FRVL…PERG). Lys36 is covalently cross-linked (Glycyl lysine isopeptide (Lys-Gly) (interchain with G-Cter in SUMO2)). A compositionally biased stretch (low complexity) spans 187–198 (GTSYGCSRSRSG). Positions 187-221 (GTSYGCSRSRSGSRGRDSPYQSRGSPHYFSPFRPY) are disordered. An interaction with SAFB1 region spans residues 188 to 200 (TSYGCSRSRSGSR). 6 positions are modified to phosphoserine: Ser189, Ser193, Ser195, Ser204, Ser208, and Ser211. Tyr214 carries the phosphotyrosine modification. Residue Ser216 is modified to Phosphoserine.

Belongs to the splicing factor SR family. Interacts with KHDRBS3. Interacts with HABP4. Interacts with NOL3/ARC/NOP30. Interacts with NSEP1/YB-1/YB1. Interacts with SAFB/SAFB1. Interacts with SRSF6/SFRS6. Interacts with TRA2B/SFRS10. Interacts with C1QBP. May also interact with DUSP11/PIR1. Extensively phosphorylated on serine residues in the RS domain.

It is found in the nucleus. Plays a role in constitutive splicing and can modulate the selection of alternative splice sites. Represses the splicing of MAPT/Tau exon 10. This Rattus norvegicus (Rat) protein is Serine/arginine-rich splicing factor 9 (Srsf9).